A 358-amino-acid chain; its full sequence is Photosystem II protein D1 2 (358 aa).

A run of 3 helical transmembrane segments spans residues 28–45 (YVGW…AATI), 117–132 (HFLI…QWEL), and 141–155 (WICV…AAMA). H117 is a chlorophyll a binding site. Position 125 (Y125) interacts with pheophytin a. Residues D169 and E188 each contribute to the [CaMn4O5] cluster site. The helical transmembrane segment at 196 to 217 (FHMLGVAGVFGGSLFSAMHGSL) threads the bilayer. H197 is a binding site for chlorophyll a. Residues H214 and 263 to 264 (SF) contribute to the a quinone site. H214 lines the Fe cation pocket. Fe cation is bound at residue H271. A helical transmembrane segment spans residues 273-287 (FLGAWPVVGIWFTSM). Residues H331, E332, D341, and A343 each coordinate [CaMn4O5] cluster. Positions 344–358 (AAESTPVALQAPAIG) are excised as a propeptide.

It belongs to the reaction center PufL/M/PsbA/D family. As to quaternary structure, PSII is composed of 1 copy each of membrane proteins PsbA, PsbB, PsbC, PsbD, PsbE, PsbF, PsbH, PsbI, PsbJ, PsbK, PsbL, PsbM, PsbT, PsbX, PsbY, PsbZ, Psb30/Ycf12, peripheral proteins PsbO, CyanoQ (PsbQ), PsbU, PsbV and a large number of cofactors. It forms dimeric complexes. The cofactor is The D1/D2 heterodimer binds P680, chlorophylls that are the primary electron donor of PSII, and subsequent electron acceptors. It shares a non-heme iron and each subunit binds pheophytin, quinone, additional chlorophylls, carotenoids and lipids. D1 provides most of the ligands for the Mn4-Ca-O5 cluster of the oxygen-evolving complex (OEC). There is also a Cl(-1) ion associated with D1 and D2, which is required for oxygen evolution. The PSII complex binds additional chlorophylls, carotenoids and specific lipids.. Post-translationally, tyr-160 forms a radical intermediate that is referred to as redox-active TyrZ, YZ or Y-Z. C-terminally processed by CtpA; processing is essential to allow assembly of the oxygen-evolving complex and thus photosynthetic growth.

The protein resides in the cellular thylakoid membrane. It carries out the reaction 2 a plastoquinone + 4 hnu + 2 H2O = 2 a plastoquinol + O2. In terms of biological role, photosystem II (PSII) is a light-driven water:plastoquinone oxidoreductase that uses light energy to abstract electrons from H(2)O, generating O(2) and a proton gradient subsequently used for ATP formation. It consists of a core antenna complex that captures photons, and an electron transfer chain that converts photonic excitation into a charge separation. The D1/D2 (PsbA/PsbD) reaction center heterodimer binds P680, the primary electron donor of PSII as well as several subsequent electron acceptors. The protein is Photosystem II protein D1 2 of Synechococcus sp. (strain CC9605).